The sequence spans 450 residues: Sulfide:quinone oxidoreductase, mitochondrial (450 aa).

FAD is bound by residues 53-54, Glu75, Gln83, and Val118; that span reads AG. N6-acetyllysine occurs at positions 134 and 173. Residue Cys201 is the Cysteine persulfide intermediate of the active site. An intrachain disulfide couples Cys201 to Cys379. Residue Asp336 participates in FAD binding. Ser343 is modified (phosphoserine). 344–347 contributes to the FAD binding site; it reads KTAA. Cys379 acts as the Cysteine persulfide intermediate in catalysis.

It belongs to the SQRD family. It depends on FAD as a cofactor.

The protein localises to the mitochondrion. It catalyses the reaction ubiquinone-10 + hydrogen sulfide + sulfite + 2 H(+) = ubiquinol-10 + thiosulfate. The catalysed reaction is a quinone + hydrogen sulfide + glutathione + H(+) = S-sulfanylglutathione + a quinol. It carries out the reaction ubiquinone-10 + hydrogen sulfide + glutathione + H(+) = S-sulfanylglutathione + ubiquinol-10. Functionally, catalyzes the oxidation of hydrogen sulfide with the help of a quinone, such as ubiquinone-10, giving rise to thiosulfate and ultimately to sulfane (molecular sulfur) atoms. Requires an additional electron acceptor; can use sulfite, sulfide or cyanide (in vitro). It is believed the in vivo electron acceptor is glutathione. This chain is Sulfide:quinone oxidoreductase, mitochondrial, found in Mus musculus (Mouse).